The chain runs to 72 residues: UPF0352 protein Shal_2512 (72 aa).

The protein belongs to the UPF0352 family.

The protein is UPF0352 protein Shal_2512 of Shewanella halifaxensis (strain HAW-EB4).